A 306-amino-acid polypeptide reads, in one-letter code: D-alanine--D-alanine ligase (306 aa).

Positions lysine 102–glutamate 300 constitute an ATP-grasp domain. Proline 128–threonine 183 serves as a coordination point for ATP. 3 residues coordinate Mg(2+): aspartate 253, glutamate 267, and asparagine 269.

The protein belongs to the D-alanine--D-alanine ligase family. Mg(2+) is required as a cofactor. It depends on Mn(2+) as a cofactor.

The protein resides in the cytoplasm. The enzyme catalyses 2 D-alanine + ATP = D-alanyl-D-alanine + ADP + phosphate + H(+). The protein operates within cell wall biogenesis; peptidoglycan biosynthesis. Cell wall formation. The polypeptide is D-alanine--D-alanine ligase (Bartonella tribocorum (strain CIP 105476 / IBS 506)).